The sequence spans 582 residues: Semenogelin-2 (582 aa).

The signal sequence occupies residues 1 to 23; that stretch reads MKSIILFVLSLLLILEKQAAVMG. A disordered region spans residues 24 to 59; the sequence is QKGGSKGQLPSGSSQFPHGQKGQHYFGQKDQQHTKS. The segment covering 31–40 has biased composition (polar residues); that stretch reads QLPSGSSQFP. A run of 3 repeats spans residues 70 to 129, 141 to 200, and 201 to 260. Residues 70–559 are repeat-rich region; sequence HVDINDHDWT…SSESHNIVIT (490 aa). Disordered stretches follow at residues 132 to 160, 173 to 194, 228 to 248, and 269 to 582; these read GGQA…SQCS, KEQA…QSSY, EEHS…RLQH, and QTKN…PIST. Polar residues-rich tracts occupy residues 137–160 and 174–194; these read HGTQ…SQCS and EQAS…QSSY. A 4 X 60 AA tandem repeats, type I region spans residues 261 to 500; the sequence is LVYNKNQHQT…QSSISFQIEK (240 aa). An N-linked (GlcNAc...) asparagine glycan is attached at N272. Positions 292 to 310 are enriched in basic and acidic residues; sequence RTEERQLHHGEKSVQKDVS. Over residues 325–334 the composition is skewed to polar residues; it reads KSQNQVTIHS. The segment covering 335–345 has biased composition (basic and acidic residues); the sequence is QDQEHGHKENK. The segment covering 372–397 has biased composition (polar residues); sequence GSISIQTEEQIHGKSQNQVRIPSQAQ. Over residues 413-426 the composition is skewed to basic and acidic residues; sequence TEERRLNSGEKDVQ. Polar residues predominate over residues 445 to 455; the sequence is KSQNQVTIPSQ. A compositionally biased stretch (basic and acidic residues) spans 456–465; it reads DQEHGHKENK. Polar residues-rich tracts occupy residues 482-496 and 506-532; these read GKST…SISF and SQIQ…QSAD. A 3-2 repeat occupies 501–559; the sequence is LVEGKSQIQTPNPNQDQWSGQNAKGKSGQSADSKQDLLSHEQKGRYKQESSESHNIVIT. Basic and acidic residues-rich tracts occupy residues 533-552 and 559-582; these read SKQD…ESSE and TEHE…PIST.

This sequence belongs to the semenogelin family. Interacts with SERPINA5. In terms of processing, semenogelin-2 is thought to form both the 71 kDa polypeptide and, in its glycosylated form, the 76 kDa polypeptide. Seminal vesicles, and to a much lesser extent, epididymis.

The protein resides in the secreted. Participates in the formation of a gel matrix (sperm coagulum) entrapping the accessory gland secretions and ejaculated spermatozoa. This is Semenogelin-2 (SEMG2) from Homo sapiens (Human).